Here is a 185-residue protein sequence, read N- to C-terminus: Large ribosomal subunit protein uL22 (185 aa).

This sequence belongs to the universal ribosomal protein uL22 family. Component of the large ribosomal subunit. Mature ribosomes consist of a small (40S) and a large (60S) subunit. The 40S subunit contains about 32 different proteins and 1 molecule of RNA (18S). The 60S subunit contains 45 different proteins and 3 molecules of RNA (25S, 5.8S and 5S).

Its subcellular location is the cytoplasm. Its function is as follows. Component of the ribosome, a large ribonucleoprotein complex responsible for the synthesis of proteins in the cell. The small ribosomal subunit (SSU) binds messenger RNAs (mRNAs) and translates the encoded message by selecting cognate aminoacyl-transfer RNA (tRNA) molecules. The large subunit (LSU) contains the ribosomal catalytic site termed the peptidyl transferase center (PTC), which catalyzes the formation of peptide bonds, thereby polymerizing the amino acids delivered by tRNAs into a polypeptide chain. The nascent polypeptides leave the ribosome through a tunnel in the LSU and interact with protein factors that function in enzymatic processing, targeting, and the membrane insertion of nascent chains at the exit of the ribosomal tunnel. In Candida albicans (strain SC5314 / ATCC MYA-2876) (Yeast), this protein is Large ribosomal subunit protein uL22.